The sequence spans 67 residues: DNA-directed RNA polymerase subunit omega (67 aa).

It belongs to the RNA polymerase subunit omega family. As to quaternary structure, the RNAP catalytic core consists of 2 alpha, 1 beta, 1 beta' and 1 omega subunit. When a sigma factor is associated with the core the holoenzyme is formed, which can initiate transcription.

The enzyme catalyses RNA(n) + a ribonucleoside 5'-triphosphate = RNA(n+1) + diphosphate. Promotes RNA polymerase assembly. Latches the N- and C-terminal regions of the beta' subunit thereby facilitating its interaction with the beta and alpha subunits. The sequence is that of DNA-directed RNA polymerase subunit omega from Polaromonas sp. (strain JS666 / ATCC BAA-500).